The primary structure comprises 128 residues: Large ribosomal subunit protein mL55 (128 aa).

Residues 1–33 (MAAVGSLLGRLRQSTVKATGPALRRLHTSSWRA) constitute a mitochondrion transit peptide. Ser-85 is subject to Phosphoserine.

It belongs to the mitochondrion-specific ribosomal protein mL55 family. As to quaternary structure, component of the mitochondrial large ribosomal subunit (mt-LSU). Mature mammalian 55S mitochondrial ribosomes consist of a small (28S) and a large (39S) subunit. The 28S small subunit contains a 12S ribosomal RNA (12S mt-rRNA) and 30 different proteins. The 39S large subunit contains a 16S rRNA (16S mt-rRNA), a copy of mitochondrial valine transfer RNA (mt-tRNA(Val)), which plays an integral structural role, and 52 different proteins.

The protein localises to the mitochondrion. The sequence is that of Large ribosomal subunit protein mL55 (MRPL55) from Homo sapiens (Human).